Reading from the N-terminus, the 1596-residue chain is Cellulose synthase 2 (1596 aa).

The interval 1–749 (MIYRAILKRL…RSARHGATAS (749 aa)) is catalytic. 2 consecutive transmembrane segments (helical) span residues 25 to 45 (SPFV…GVTI) and 106 to 126 (LSLL…LSYF). The catalytic subdomain A stretch occupies residues 145 to 238 (DWPVVDVYVP…YVVIFDCDHI (94 aa)). Asp187 is a catalytic residue. The substrate site is built by Asp234 and Asp236. Residues 315-375 (SAVLGIGGFA…GQRVRWARGM (61 aa)) form a catalytic subdomain B region. Asp331 is a catalytic residue. The next 4 helical transmembrane spans lie at 396–416 (LCYL…VFLA), 421–441 (FLFL…VYAF), 505–525 (FDLN…LALV), and 544–564 (FALN…SIAV). A PilZ domain is found at 570 to 669 (QIRHKPRVRA…ERQIVEFMFG (100 aa)). The interval 750–1596 (LIVLLGLPAA…RVKDTTDASH (847 aa)) is cyclic di-GMP binding domain. 2 disordered regions span residues 769–812 (SRAT…IAPA) and 828–868 (TGPA…APPI). Positions 783-809 (VEPPPVNAPPPPSLPQPPGTLPTPPQI) are enriched in pro residues. Residues 1553-1573 (LTLYVLGLVGAGLVAAAAVRL) traverse the membrane as a helical segment.

It in the N-terminal section; belongs to the glycosyltransferase 2 family. The protein in the C-terminal section; belongs to the AcsB/BcsB family.

It is found in the cell inner membrane. It carries out the reaction [(1-&gt;4)-beta-D-glucosyl](n) + UDP-alpha-D-glucose = [(1-&gt;4)-beta-D-glucosyl](n+1) + UDP + H(+). This chain is Cellulose synthase 2 (acsAII), found in Novacetimonas hansenii (Komagataeibacter hansenii).